Reading from the N-terminus, the 676-residue chain is Envelope glycoprotein (676 aa).

The signal sequence occupies residues 1–34 (MACSTLSKSPKDKIDPRDLLIPLILFLSLKGARS). Residues 35–270 (AAPGSSPHQV…KYQNLGPRVP (236 aa)) are receptor-binding domain (RBD). Residues 35-620 (AAPGSSPHQV…FNRSPWFTTL (586 aa)) lie on the Extracellular side of the membrane. N-linked (GlcNAc...) asparagine; by host glycosylation is present at Asn46. 5 disulfides stabilise this stretch: Cys80–Cys132, Cys106–Cys121, Cys107–Cys117, Cys155–Cys175, and Cys167–Cys180. His89 serves as a coordination point for Zn(2+). Asp120 is a binding site for Zn(2+). The N-linked (GlcNAc...) asparagine; by host glycan is linked to Asn202. Cys212 and Cys218 are oxidised to a cystine. Residues 287-322 (NPLPKPAKSPSASNSTPTLISPSPAPTQPPPAGTGD) are disordered. Residues 294–308 (KSPSASNSTPTLISP) show a composition bias toward low complexity. Residues 309–318 (SPAPTQPPPA) are compositionally biased toward pro residues. A glycan (N-linked (GlcNAc...) asparagine; by host) is linked at Asn336. 6 cysteine pairs are disulfide-bonded: Cys346–Cys349, Cys346–Cys573, Cys376–Cys430, Cys395–Cys407, Cys437–Cys450, and Cys565–Cys572. The short motif at 346-349 (CWLC) is the CXXC element. Asn368 and Asn375 each carry an N-linked (GlcNAc...) asparagine; by host glycan. N-linked (GlcNAc...) asparagine; by host glycans are attached at residues Asn408 and Asn444. The tract at residues 482 to 502 (VSLTLALLLGGLTMGGIAAGV) is fusion peptide. A coiled-coil region spans residues 513-547 (QQFQQLHAAVQDDLKEVEKSITNLEKSLTSLSEVV). The segment at 548–564 (LQNRRGLDLLFLKEGGL) is immunosuppression. Positions 565–573 (CAALKEECC) match the CX6CC motif. Residues 621-641 (ISTIMGPLIILLLILLFGPCI) form a helical membrane-spanning segment. Residue Cys640 is the site of S-palmitoyl cysteine; by host attachment. Over 642-676 (LNRLVQFVKDRISVVQALVLTQQYHQLKPLEYEPQ) the chain is Cytoplasmic. A YXXL motif; contains endocytosis signal motif is present at residues 665-668 (YHQL).

In terms of assembly, the mature envelope protein (Env) consists of a trimer of SU-TM heterodimers attached by a labile interchain disulfide bond. In terms of processing, specific enzymatic cleavages in vivo yield mature proteins. Envelope glycoproteins are synthesized as an inactive precursor that is N-glycosylated and processed likely by host cell furin or by a furin-like protease in the Golgi to yield the mature SU and TM proteins. The cleavage site between SU and TM requires the minimal sequence [KR]-X-[KR]-R. The R-peptide is released from the C-terminus of the cytoplasmic tail of the TM protein upon particle formation as a result of proteolytic cleavage by the viral protease. Cleavage of this peptide is required for TM to become fusogenic. Post-translationally, the CXXC motif is highly conserved across a broad range of retroviral envelope proteins. It is thought to participate in the formation of a labile disulfide bond possibly with the CX6CC motif present in the transmembrane protein. Isomerization of the intersubunit disulfide bond to an SU intrachain disulfide bond is thought to occur upon receptor recognition in order to allow membrane fusion. The transmembrane protein is palmitoylated. In terms of processing, the R-peptide is palmitoylated.

It localises to the virion membrane. It is found in the host cell membrane. In terms of biological role, the surface protein (SU) attaches the virus to the host cell by binding to its receptor. This interaction triggers the refolding of the transmembrane protein (TM) and is thought to activate its fusogenic potential by unmasking its fusion peptide. Fusion occurs at the host cell plasma membrane. The transmembrane protein (TM) acts as a class I viral fusion protein. Under the current model, the protein has at least 3 conformational states: pre-fusion native state, pre-hairpin intermediate state, and post-fusion hairpin state. During viral and target cell membrane fusion, the coiled coil regions (heptad repeats) assume a trimer-of-hairpins structure, positioning the fusion peptide in close proximity to the C-terminal region of the ectodomain. The formation of this structure appears to drive apposition and subsequent fusion of viral and target cell membranes. Membranes fusion leads to delivery of the nucleocapsid into the cytoplasm. The polypeptide is Envelope glycoprotein (env) (Mus musculus (Mouse)).